Consider the following 554-residue polypeptide: DNA ligase B (554 aa).

Lysine 122 functions as the N6-AMP-lysine intermediate in the catalytic mechanism.

This sequence belongs to the NAD-dependent DNA ligase family. LigB subfamily.

The catalysed reaction is NAD(+) + (deoxyribonucleotide)n-3'-hydroxyl + 5'-phospho-(deoxyribonucleotide)m = (deoxyribonucleotide)n+m + AMP + beta-nicotinamide D-nucleotide.. Functionally, catalyzes the formation of phosphodiester linkages between 5'-phosphoryl and 3'-hydroxyl groups in double-stranded DNA using NAD as a coenzyme and as the energy source for the reaction. In Pseudomonas fluorescens (strain SBW25), this protein is DNA ligase B.